The following is a 753-amino-acid chain: MSDVKYFEDTEFGLIEAVATIDNGDFGTRTIRFETGQLARQADGAVTTYLDDDTMLLATTTASNQPREGFDFFPLTVDVEERMYAAGRIPGSFFRREGRPSTEAILACRLIDRPLRPTFVKGLRNEVQIVVTVMSMNPEDYYDVVAINGASAATRISGLPVSGAVGGVRMALVVDEKHPEGQWVAFPTHAQHEQSVFEIVVAGRLVERKRGNKTFSDVAVMMVEAGASENVVNRVKDGAPAPTEKIVSDGLEAAKPFIDILCRAQEGLAQRVGNAAKEFPLFPPYTDEVYSAVERKVSKKLASLLTLKAKQERDDATNAYMEEIEAELLPKFEASYSSAAEASKEIRAGYNAVMKAIVRRMILTDHFRIDGRGVTDIRDLAVEVELIPRAHGSSLFERGETQILGVTTLDMLKMEQQIDSLAPGDAKRYMHHYNFPPYSTGETGRVGSPKRREIGHGALAERAVLPVIPSREEFPYAIRQVSEALGSNGSTSMGSVCASTLSLYNAGVPLKAPVAGIAMGLVSGEIDGKTEYVALTDILGAEDAFGDMDFKVAGTADFITALQLDTKLDGIPSKVLSDALEQARDARLTILNTMADVINGPDEMSKFAPRITTVKIPVAKIGELIGPKGKNINALTEETGANISIEDDGTVFISAADGASAEAAIEKINALANPQLPKVGERFLGTVVKTTAFGAFVSLLPGRDGLVHISKLGNGKRVEKVDDVVKVGEKIQVEIADIDNRGKISLVPVVEED.

Mg(2+) is bound by residues D543 and D549. Residues 609-668 enclose the KH domain; sequence PRITTVKIPVAKIGELIGPKGKNINALTEETGANISIEDDGTVFISAADGASAEAAIEKI. The S1 motif domain maps to 680–749; that stretch reads GERFLGTVVK…NRGKISLVPV (70 aa).

Belongs to the polyribonucleotide nucleotidyltransferase family. Mg(2+) serves as cofactor.

Its subcellular location is the cytoplasm. The enzyme catalyses RNA(n+1) + phosphate = RNA(n) + a ribonucleoside 5'-diphosphate. In terms of biological role, involved in mRNA degradation. Catalyzes the phosphorolysis of single-stranded polyribonucleotides processively in the 3'- to 5'-direction. This is Polyribonucleotide nucleotidyltransferase from Corynebacterium glutamicum (strain ATCC 13032 / DSM 20300 / JCM 1318 / BCRC 11384 / CCUG 27702 / LMG 3730 / NBRC 12168 / NCIMB 10025 / NRRL B-2784 / 534).